Here is a 1053-residue protein sequence, read N- to C-terminus: MKFRDYLKDNKVSHWRDKYIDYEYLKNLIDNEYINAEILNSAIIDLPLSPEEQNNINKNNNNNNNNNNNNNNNNNNNNNINNNNNNNNTLKDGEQTNSNNISIPNQMAPQESSGEDEDDENENGNGVVGDEDGGDDDEIEMDELVIDDNGEIINITATAGSRVKVKKGINKGVKRLKKIAKNTNNRLSRMVSRSPKNKGLGSSSEIEGDEFQLDGGGISSQIEMVASNNITGATVFVPQETFQDGFIDQVNKVDIFFVDRYRKTKFKCVDLVGMIPFLSDNEQLRTIRNIDYVKQGFHDNYHYLESLESYKNLNLDGFYKILDKYEKINPRIAKECRKYLENTRLTSTNSPVRELSRRIKQIYARYFTGNDIKLANNQIRTNKQVNQFQNYIIGFLIGASAILIAQVIFKFYYYFPDVADSPKNSPMAWLLFRISSLPIILGTLFALMTKLWEKAGINYVFIFELKPDIKRSSSRYLMYGMIFVTMWLVVFNVYVDSISNKTGSPETSRYLLLIPLLFILGSIFFLILPFKVLAHRTRFWVLHKMSKVVQAPFVPVRFPDFFMSVQLLCLGEFLFNMQQIVCMFKFNDPLYSPSGVCFKHKAVIFPILSVLPFYWRVMQCVRRFWETGQFFPHITSAIRSTFSIVTNILLWVANNYGNKEWSWIKILWFIINVVGTVYKLYADFTVDWGLFLNYKTNKQWPLREKMVFKRKWVYYVAMSFDTFFRFVWLIVFSIRQGTSYKLDHPLFLFWFSLSEIAWAAQFIFFRVESEHVQCADTYSHFKDIPLPFSQDYKNYMEEKKSRYDEKKPHHHHHHDNNNNETKDGSGGTHHRRNLSNGHHPYDDDDDDESIDSDADSKDLNLESNSEFVDDEGYNQRKNSIISSIKKIASTQELNSMNRISSHPDLYSTMQRFAGHVPDSNSSMPRMYSHPDFNHPIPRVLTSHVEVNPSTLRTVPQHRLNNIPNQRIISHADINPQHLRVGSPRVEFNSTVQQRSPHGEIQSSMIRNHSRADLNSSMQRIQSHPELNSSNRNQVDPNSPMNRLITRADLNKSR.

The SPX domain occupies 1–339 (MKFRDYLKDN…PRIAKECRKY (339 aa)). A compositionally biased stretch (low complexity) spans 54–88 (NNINKNNNNNNNNNNNNNNNNNNNNNINNNNNNNN). Residues 54–137 (NNINKNNNNN…VGDEDGGDDD (84 aa)) are disordered. Over residues 95–112 (QTNSNNISIPNQMAPQES) the composition is skewed to polar residues. Residues 113–122 (SGEDEDDENE) are compositionally biased toward acidic residues. Transmembrane regions (helical) follow at residues 391 to 411 (YIIGFLIGASAILIAQVIFKF), 427 to 447 (MAWLLFRISSLPIILGTLFAL), 476 to 496 (YLMYGMIFVTMWLVVFNVYVD), 510 to 530 (YLLLIPLLFILGSIFFLILPF), 561 to 581 (FFMSVQLLCLGEFLFNMQQIV), 595 to 615 (GVCFKHKAVIFPILSVLPFYW), 630 to 652 (FFPHITSAIRSTFSIVTNILLWV), 666 to 686 (ILWFIINVVGTVYKLYADFTV), 712 to 732 (WVYYVAMSFDTFFRFVWLIVF), and 745 to 765 (PLFLFWFSLSEIAWAAQFIFF). Residues 596–798 (VCFKHKAVIF…SQDYKNYMEE (203 aa)) enclose the EXS domain. Disordered stretches follow at residues 799-871 (KKSR…VDDE) and 1023-1053 (HPELNSSNRNQVDPNSPMNRLITRADLNKSR). A compositionally biased stretch (acidic residues) spans 842-853 (DDDDDDESIDSD). Positions 1023-1040 (HPELNSSNRNQVDPNSPM) are enriched in polar residues.

It belongs to the SYG1 (TC 2.A.94) family.

It localises to the membrane. The polypeptide is SPX and EXS domain-containing protein 2 (Dictyostelium discoideum (Social amoeba)).